The chain runs to 3130 residues: DNA polymerase zeta catalytic subunit (3130 aa).

6 disordered regions span residues alanine 263–threonine 295, glycine 425–glutamine 457, leucine 487–serine 510, leucine 524–isoleucine 548, proline 697–asparagine 728, and valine 817–asparagine 871. Basic and acidic residues predominate over residues serine 286–threonine 295. A compositionally biased stretch (acidic residues) spans glutamate 497 to tryptophan 509. Polar residues-rich tracts occupy residues aspartate 533–isoleucine 548 and glutamate 699–asparagine 728. A compositionally biased stretch (basic residues) spans serine 828–alanine 838. Residues glutamate 842–lysine 854 show a composition bias toward low complexity. The segment covering aspartate 855–asparagine 866 has biased composition (polar residues). Residue serine 1030 is modified to Phosphoserine. Disordered regions lie at residues tyrosine 1035–glutamate 1095, serine 1162–isoleucine 1231, and arginine 1537–lysine 1600. Phosphothreonine is present on threonine 1041. 2 stretches are compositionally biased toward basic residues: residues lysine 1043–lysine 1061 and lysine 1166–alanine 1179. Residues lysine 1213 to isoleucine 1231 show a composition bias toward basic and acidic residues. The segment covering lysine 1540 to leucine 1565 has biased composition (polar residues). Residues alanine 1570–threonine 1589 are compositionally biased toward basic residues. The span at lysine 1590–lysine 1600 shows a compositional bias: basic and acidic residues. Serine 1724 bears the Phosphoserine mark. Disordered stretches follow at residues asparagine 1845–methionine 1882, asparagine 1962–proline 1984, glutamate 2017–proline 2050, proline 2080–glutamate 2150, and alanine 2216–glycine 2236. A mediates interaction with MAD2L2 region spans residues methionine 1847–aspartate 1898. Residues threonine 1849–serine 1865 show a composition bias toward low complexity. Residue serine 1967 is modified to Phosphoserine. The span at proline 2080–glutamine 2092 shows a compositional bias: polar residues. Residues tyrosine 2113–serine 2122 show a composition bias toward low complexity. A compositionally biased stretch (polar residues) spans proline 2221–glycine 2236. Residues cysteine 3042, cysteine 3045, cysteine 3054, and cysteine 3057 each coordinate Zn(2+). The CysA-type zinc-finger motif lies at cysteine 3042–cysteine 3057. Cysteine 3086, cysteine 3089, cysteine 3099, and cysteine 3104 together coordinate [4Fe-4S] cluster. The CysB motif motif lies at cysteine 3086–cysteine 3104.

It belongs to the DNA polymerase type-B family. In terms of assembly, heterodimer with MAD2L2. This dimer forms the minimal DNA polymerase zeta complex (Pol-zeta2), with REV3L bearing DNA polymerase catalytic activity, although its activity is very low in this context. Component of the tetrameric Pol-zeta complex (Pol-zeta4), which consists of REV3L, MAD2L2, POLD2 and POLD3; Pol-zeta4 is the fully active form of DNA polymerase zeta. [4Fe-4S] cluster is required as a cofactor. Ubiquitously expressed.

It localises to the nucleus. The catalysed reaction is DNA(n) + a 2'-deoxyribonucleoside 5'-triphosphate = DNA(n+1) + diphosphate. Functionally, catalytic subunit of the DNA polymerase zeta complex, an error-prone polymerase specialized in translesion DNA synthesis (TLS). Lacks an intrinsic 3'-5' exonuclease activity and thus has no proofreading function. This Homo sapiens (Human) protein is DNA polymerase zeta catalytic subunit (REV3L).